The chain runs to 137 residues: Probable calcium-binding protein CML33 (137 aa).

EF-hand domains are found at residues 1 to 36 (MNNMSLSDIFERFDTSKDGKISWEEFRDAIHALSPS), 37 to 72 (IPSEKLVEMFIQLDTNGDGQVDAAKFASCMDQTAQS), 76 to 111 (DVEKELKDAFKLYDINCDGKISANELHVVMTRLGEK), and 112 to 137 (CTVESCVGMVQAIDVDGDGYIRFVGV). 5 residues coordinate Ca(2+): D14, S16, D18, K20, and E25. D89, N91, D93, K95, and E100 together coordinate Ca(2+).

In terms of biological role, potential calcium sensor. This is Probable calcium-binding protein CML33 (CML33) from Arabidopsis thaliana (Mouse-ear cress).